We begin with the raw amino-acid sequence, 205 residues long: Dephospho-CoA kinase (205 aa).

The 198-residue stretch at Leu7 to Thr204 folds into the DPCK domain. Gly15 to Ala20 is a binding site for ATP.

It belongs to the CoaE family.

It is found in the cytoplasm. It catalyses the reaction 3'-dephospho-CoA + ATP = ADP + CoA + H(+). The protein operates within cofactor biosynthesis; coenzyme A biosynthesis; CoA from (R)-pantothenate: step 5/5. Catalyzes the phosphorylation of the 3'-hydroxyl group of dephosphocoenzyme A to form coenzyme A. The protein is Dephospho-CoA kinase of Aromatoleum aromaticum (strain DSM 19018 / LMG 30748 / EbN1) (Azoarcus sp. (strain EbN1)).